We begin with the raw amino-acid sequence, 67 residues long: Systemic RNA interference defective protein 5 (67 aa).

Over methionine 1–aspartate 18 the chain is Extracellular. The helical transmembrane segment at isoleucine 19–asparagine 39 threads the bilayer. Topologically, residues arginine 40 to aspartate 67 are cytoplasmic.

As to expression, ubiquitously present in most tissues tested. Expressed in the somatic cells of intestine, muscle, neurons, somatic gonad and embryos but not in the germline (at protein level).

It is found in the late endosome membrane. Its function is as follows. Plays a role in RNA-mediated gene silencing by mediating transport of both ingested and endogenous dsRNA between cells. Not required for the uptake of dsRNA from the intestinal lumen. The sequence is that of Systemic RNA interference defective protein 5 from Caenorhabditis elegans.